Here is a 322-residue protein sequence, read N- to C-terminus: Ribokinase (322 aa).

Residues 25–27 (MTD), 53–57 (GKGAN), and Glu-154 contribute to the substrate site. Residues Asn-199, 235 to 240 (TLGAEG), and Thr-256 contribute to the ATP site. The K(+) site is built by Asp-263 and Thr-265. Residues 268 to 269 (GD) and Asn-295 contribute to the ATP site. Residue Asp-269 participates in substrate binding. The active-site Proton acceptor is Asp-269. K(+) is bound by residues Ser-301, Ala-304, Gly-306, and Ser-310.

It belongs to the carbohydrate kinase PfkB family. Ribokinase subfamily. Homodimer. Mg(2+) is required as a cofactor.

It localises to the cytoplasm. The protein localises to the nucleus. The enzyme catalyses D-ribose + ATP = D-ribose 5-phosphate + ADP + H(+). It functions in the pathway carbohydrate metabolism; D-ribose degradation; D-ribose 5-phosphate from beta-D-ribopyranose: step 2/2. Its activity is regulated as follows. Activated by a monovalent cation that binds near, but not in, the active site. The most likely occupant of the site in vivo is potassium. Ion binding induces a conformational change that may alter substrate affinity. Competitively inhibited by phosphonoacetic acid, etidronate, 2-carboxethylphosphonic acid, N-(phosphonomethyl)glycine, N-(phosphonomethyl)iminodiacetic acid and clodronate. Functionally, catalyzes the phosphorylation of ribose at O-5 in a reaction requiring ATP and magnesium. The resulting D-ribose-5-phosphate can then be used either for sythesis of nucleotides, histidine, and tryptophan, or as a component of the pentose phosphate pathway. The chain is Ribokinase from Homo sapiens (Human).